The sequence spans 154 residues: MVLKVKMGDIGVGKSPESIETLLGSCVAIILYDKGKKIGGLAHVMLPKSRMQKEKNPGKYVDTAIPELITKIVKMGARKDRLTVKLAGGAAMFGNNSNNIDVGKKNIEASKIEIKKIGLRVSSEDLGGDTGRTITLSLKDGSVMVRKGSELKTI.

It belongs to the CheD family.

The enzyme catalyses L-glutaminyl-[protein] + H2O = L-glutamyl-[protein] + NH4(+). Probably deamidates glutamine residues to glutamate on methyl-accepting chemotaxis receptors (MCPs), playing an important role in chemotaxis. The chain is Probable chemoreceptor glutamine deamidase CheD from Methanococcus maripaludis (strain C5 / ATCC BAA-1333).